A 120-amino-acid chain; its full sequence is UPF0342 protein Csac_0863 (120 aa).

Belongs to the UPF0342 family.

The protein is UPF0342 protein Csac_0863 of Caldicellulosiruptor saccharolyticus (strain ATCC 43494 / DSM 8903 / Tp8T 6331).